We begin with the raw amino-acid sequence, 256 residues long: Imidazole glycerol phosphate synthase subunit HisF (256 aa).

Catalysis depends on residues D11 and D130.

It belongs to the HisA/HisF family. In terms of assembly, heterodimer of HisH and HisF.

It is found in the cytoplasm. The catalysed reaction is 5-[(5-phospho-1-deoxy-D-ribulos-1-ylimino)methylamino]-1-(5-phospho-beta-D-ribosyl)imidazole-4-carboxamide + L-glutamine = D-erythro-1-(imidazol-4-yl)glycerol 3-phosphate + 5-amino-1-(5-phospho-beta-D-ribosyl)imidazole-4-carboxamide + L-glutamate + H(+). It functions in the pathway amino-acid biosynthesis; L-histidine biosynthesis; L-histidine from 5-phospho-alpha-D-ribose 1-diphosphate: step 5/9. In terms of biological role, IGPS catalyzes the conversion of PRFAR and glutamine to IGP, AICAR and glutamate. The HisF subunit catalyzes the cyclization activity that produces IGP and AICAR from PRFAR using the ammonia provided by the HisH subunit. The chain is Imidazole glycerol phosphate synthase subunit HisF from Psychrobacter sp. (strain PRwf-1).